A 529-amino-acid chain; its full sequence is Zinc finger CCCH domain-containing protein 65 (529 aa).

The segment covering 1-10 (MADADARAPP) has biased composition (basic and acidic residues). Disordered stretches follow at residues 1 to 36 (MADADARAPPKSDPGATPIGSISPSSAAPAAGEDEV) and 134 to 179 (PARK…GSYV). Residues 14–31 (PGATPIGSISPSSAAPAA) show a composition bias toward low complexity. 3 consecutive C3H1-type zinc fingers follow at residues 108–136 (RPGEPDCTYYVKFGSCRFGMKCKFNHPAR), 237–265 (GSSQEECKYYSTPGGCKFGKACKYLHRDG), and 285–313 (RPGEKECPYYMRTGSCKYATNCKFHHPDP). The interval 313-347 (PSNVASKDPQLEHENGDAPQQDVQGSSSQPNASIW) is disordered. Polar residues predominate over residues 333–344 (QDVQGSSSQPNA). C3H1-type zinc fingers lie at residues 433-461 (RPGQPECQHFVKSGFCKFRMKCKYHHPRS) and 477-505 (KPDQPVCTYYGRYGVCKFGPACAYNHPFN).

The polypeptide is Zinc finger CCCH domain-containing protein 65 (Oryza sativa subsp. japonica (Rice)).